The chain runs to 340 residues: Ketol-acid reductoisomerase (NADP(+)) (340 aa).

The region spanning 3–182 is the KARI N-terminal Rossmann domain; the sequence is VQMEYEKDVK…GAARVGLLET (180 aa). Residues 26-29, Arg-49, Ser-53, and 83-86 each bind NADP(+); these read YGSQ and DEIQ. His-108 is a catalytic residue. Gly-134 lines the NADP(+) pocket. The KARI C-terminal knotted domain occupies 183-328; that stretch reads TYKEETEEDL…AELRKAMPFV (146 aa). Mg(2+) is bound by residues Asp-191, Glu-195, Glu-227, and Glu-231. Substrate is bound at residue Ser-252.

This sequence belongs to the ketol-acid reductoisomerase family. Mg(2+) serves as cofactor.

It catalyses the reaction (2R)-2,3-dihydroxy-3-methylbutanoate + NADP(+) = (2S)-2-acetolactate + NADPH + H(+). It carries out the reaction (2R,3R)-2,3-dihydroxy-3-methylpentanoate + NADP(+) = (S)-2-ethyl-2-hydroxy-3-oxobutanoate + NADPH + H(+). Its pathway is amino-acid biosynthesis; L-isoleucine biosynthesis; L-isoleucine from 2-oxobutanoate: step 2/4. The protein operates within amino-acid biosynthesis; L-valine biosynthesis; L-valine from pyruvate: step 2/4. Its function is as follows. Involved in the biosynthesis of branched-chain amino acids (BCAA). Catalyzes an alkyl-migration followed by a ketol-acid reduction of (S)-2-acetolactate (S2AL) to yield (R)-2,3-dihydroxy-isovalerate. In the isomerase reaction, S2AL is rearranged via a Mg-dependent methyl migration to produce 3-hydroxy-3-methyl-2-ketobutyrate (HMKB). In the reductase reaction, this 2-ketoacid undergoes a metal-dependent reduction by NADPH to yield (R)-2,3-dihydroxy-isovalerate. The chain is Ketol-acid reductoisomerase (NADP(+)) from Streptococcus thermophilus (strain CNRZ 1066).